The chain runs to 72 residues: UPF0346 protein EF_1680 (72 aa).

It belongs to the UPF0346 family.

In Enterococcus faecalis (strain ATCC 700802 / V583), this protein is UPF0346 protein EF_1680.